The following is a 191-amino-acid chain: Protein Ves (191 aa).

This sequence belongs to the Ves family.

The protein is Protein Ves of Escherichia coli (strain SMS-3-5 / SECEC).